The chain runs to 400 residues: U-box domain-containing protein 37 (400 aa).

Residues 229 to 298 (KEWESAYLEE…RKAKEERDLL (70 aa)) are a coiled coil. The region spanning 324 to 398 (EAPQYFICPI…QEWLHASSSF (75 aa)) is the U-box domain.

The catalysed reaction is S-ubiquitinyl-[E2 ubiquitin-conjugating enzyme]-L-cysteine + [acceptor protein]-L-lysine = [E2 ubiquitin-conjugating enzyme]-L-cysteine + N(6)-ubiquitinyl-[acceptor protein]-L-lysine.. The protein operates within protein modification; protein ubiquitination. Functions as an E3 ubiquitin ligase. The polypeptide is U-box domain-containing protein 37 (PUB37) (Arabidopsis thaliana (Mouse-ear cress)).